The sequence spans 242 residues: Tryptophan synthase alpha chain (242 aa).

Active-site proton acceptor residues include E31 and D42.

This sequence belongs to the TrpA family. Tetramer of two alpha and two beta chains.

It catalyses the reaction (1S,2R)-1-C-(indol-3-yl)glycerol 3-phosphate + L-serine = D-glyceraldehyde 3-phosphate + L-tryptophan + H2O. Its pathway is amino-acid biosynthesis; L-tryptophan biosynthesis; L-tryptophan from chorismate: step 5/5. Functionally, the alpha subunit is responsible for the aldol cleavage of indoleglycerol phosphate to indole and glyceraldehyde 3-phosphate. This chain is Tryptophan synthase alpha chain, found in Staphylococcus aureus (strain MRSA252).